Consider the following 257-residue polypeptide: MRYALGVEYDGSEFQGWQQLGEHGGPSVQASLQAALSSVADAPVQVVCAGRTDAGVHGECQVVHFDSDAHREPRGWMLGTTARLPPSIAVRWCVPAAADFHARFSARARRYRYRLLNRQIRPALYRQTLSWERRPLDADAMHVAAQALLGENDFSAFRSVQCQALHARRNLQAIHVQRIGEVVEVQVQANAFLHHMVRNIVGSLILVGTGEQPADWIATLLAGRDRTVAGPTAPPQGLVFIGPLYPAEWHLPAEVTQ.

Catalysis depends on Asp-53, which acts as the Nucleophile. Tyr-111 provides a ligand contact to substrate.

The protein belongs to the tRNA pseudouridine synthase TruA family. In terms of assembly, homodimer.

The enzyme catalyses uridine(38/39/40) in tRNA = pseudouridine(38/39/40) in tRNA. Functionally, formation of pseudouridine at positions 38, 39 and 40 in the anticodon stem and loop of transfer RNAs. The sequence is that of tRNA pseudouridine synthase A from Xanthomonas oryzae pv. oryzae (strain MAFF 311018).